Reading from the N-terminus, the 303-residue chain is MSPQELKNVLQSGLLSFPLTDFDRELNFAPKPYAERLKWLQPYGASALFAAGGTGEFFSLEPGEYSDVIKVALDTCRGRTPIIAGAGGGTRVAIQYAQEAERLGAQGVLLLPHYLTEASQEGLIAHVQAVCRSVRFGVTVYNRGACKLTPASLLVLAETCPNLIGFKDGIGDIETFVSIRQTLGERFAYLGGLPTAEVFAGAYKAMGCPVYSSAVFNFIPKTAMEFYNAHAAGDSATCDRLIRDFFLPYIALRNKNHGYAVSIVKAGATLIGHGAGPVRPPLSDLKPAEVAELAALMAKLGPQ.

This sequence belongs to the DapA family.

The enzyme catalyses 5-dehydro-4-deoxy-D-glucarate + H(+) = 2,5-dioxopentanoate + CO2 + H2O. The protein operates within carbohydrate acid metabolism; D-glucarate degradation; 2,5-dioxopentanoate from D-glucarate: step 2/2. This chain is Probable 5-dehydro-4-deoxyglucarate dehydratase, found in Leptothrix cholodnii (strain ATCC 51168 / LMG 8142 / SP-6) (Leptothrix discophora (strain SP-6)).